An 863-amino-acid polypeptide reads, in one-letter code: MGVRHSASKDYIAGRPLVPGEAPLDKKNSNFSSWKPVTEIDDRDAKCADNWVPRHPDLIRLTGKHPFNSEPPHADVMKEGWLTPVSMHFVRNHGAVPRLEWGSHRITITGLVERPMEITMDDIAKLPAVTVPCLLTCCGNRRKEVNMVKNSQGFSWGPGAVSVNNWTGARLSDVLKLVGVKSQAQGAKYVHFCGPKGELPKGVDGSYGTALTLGHALDPSMDVLIAYKQNGQFLHPDHGFPCRMLIPGWIGGRSVKWLSHLHVSDKDSQNWYHFHDNKVLPPHVDAESAAKQGWWKDPSFILKELNINSTISSPGHDERILMDQNRRYTMKGYAYSGGGRKIVRVEVSFNGGETWSHPAKIIVTETPNQAGKHWTWVHWELPVDTSQFFTATEVVCRAWDESQNTQPAVLTWTLLGQGNNSMFRLRLHKEVDPQGRLCIRFQQPAPILPGPLGNVGWREQEAGSAVPSAPAAVAAAAPGLDSTKKYVTKAMLEQHVEEASVWFAYKGKVYDGTKFLDDHPGGADSILMAGGEDATEDFDAVHSDSAKKQLEQFYIAELAPEGVPVPANLLYGGVDAAVVVMPGTAAAPLPAIDVDAPFLNPKKQKAAELKEKIKISHDVTLFRFGLEHDEQLLGLPTGKHMLIRKKVTNAEGDEEVVMRAYTPTTANETRGHFDLVVKIYKANVHPKFPEGGKFSQILEALEVGDTVEVKGPIGHFHYDRPGHYKNHKLESEVKRINMIAGGTGLTPMYQVMKAILSNPSDLTEIRLLYANQTEADILLRPELEALAKSHPDRVKIHYTVDRPTPGWKYSSGFIDLDMCERALFRYEPGTISVLCGPPPMLKFACHPNLEKMGFEKGVTSIEF.

Cys137 is a binding site for Mo-molybdopterin. The 76-residue stretch at 484–559 (KKYVTKAMLE…LEQFYIAELA (76 aa)) folds into the Cytochrome b5 heme-binding domain. Heme is bound by residues His519 and His542. The 118-residue stretch at 602-719 (KKQKAAELKE…KGPIGHFHYD (118 aa)) folds into the FAD-binding FR-type domain. FAD is bound by residues 659–662 (RAYT), 676–680 (VVKIY), Phe688, 693–695 (KFS), and Thr746.

The protein belongs to the nitrate reductase family. Homodimer. FAD is required as a cofactor. Requires Mo-molybdopterin as cofactor. The cofactor is heme.

It catalyses the reaction nitrite + NAD(+) + H2O = nitrate + NADH + H(+). Its function is as follows. Nitrate reductase is a key enzyme involved in the first step of nitrate assimilation in plants, fungi and bacteria. This is Nitrate reductase [NADH] from Ulva prolifera (Green seaweed).